The following is a 486-amino-acid chain: Glutamyl-tRNA(Gln) amidotransferase subunit A (486 aa).

Active-site charge relay system residues include K76 and S151. The Acyl-ester intermediate role is filled by S175.

Belongs to the amidase family. GatA subfamily. In terms of assembly, heterotrimer of A, B and C subunits.

It carries out the reaction L-glutamyl-tRNA(Gln) + L-glutamine + ATP + H2O = L-glutaminyl-tRNA(Gln) + L-glutamate + ADP + phosphate + H(+). Allows the formation of correctly charged Gln-tRNA(Gln) through the transamidation of misacylated Glu-tRNA(Gln) in organisms which lack glutaminyl-tRNA synthetase. The reaction takes place in the presence of glutamine and ATP through an activated gamma-phospho-Glu-tRNA(Gln). The polypeptide is Glutamyl-tRNA(Gln) amidotransferase subunit A (Nitrosomonas eutropha (strain DSM 101675 / C91 / Nm57)).